Reading from the N-terminus, the 235-residue chain is Orotidine 5'-phosphate decarboxylase (235 aa).

Substrate contacts are provided by residues Asp-12, Lys-34, 61–70, Thr-116, Arg-177, Gln-186, Gly-206, and Arg-207; that span reads DMKLLDIDNT. Catalysis depends on Lys-63, which acts as the Proton donor.

The protein belongs to the OMP decarboxylase family. Type 1 subfamily. In terms of assembly, homodimer.

The enzyme catalyses orotidine 5'-phosphate + H(+) = UMP + CO2. The protein operates within pyrimidine metabolism; UMP biosynthesis via de novo pathway; UMP from orotate: step 2/2. Its function is as follows. Catalyzes the decarboxylation of orotidine 5'-monophosphate (OMP) to uridine 5'-monophosphate (UMP). The polypeptide is Orotidine 5'-phosphate decarboxylase (Rhizobium johnstonii (strain DSM 114642 / LMG 32736 / 3841) (Rhizobium leguminosarum bv. viciae)).